A 287-amino-acid chain; its full sequence is Pyridoxal 5'-phosphate synthase subunit PdxS (287 aa).

Aspartate 21 is a D-ribose 5-phosphate binding site. Lysine 78 serves as the catalytic Schiff-base intermediate with D-ribose 5-phosphate. Glycine 150 contributes to the D-ribose 5-phosphate binding site. Arginine 162 is a binding site for D-glyceraldehyde 3-phosphate. D-ribose 5-phosphate is bound by residues glycine 211 and 232-233 (GS).

This sequence belongs to the PdxS/SNZ family. As to quaternary structure, in the presence of PdxT, forms a dodecamer of heterodimers.

The catalysed reaction is aldehydo-D-ribose 5-phosphate + D-glyceraldehyde 3-phosphate + L-glutamine = pyridoxal 5'-phosphate + L-glutamate + phosphate + 3 H2O + H(+). Its pathway is cofactor biosynthesis; pyridoxal 5'-phosphate biosynthesis. Catalyzes the formation of pyridoxal 5'-phosphate from ribose 5-phosphate (RBP), glyceraldehyde 3-phosphate (G3P) and ammonia. The ammonia is provided by the PdxT subunit. Can also use ribulose 5-phosphate and dihydroxyacetone phosphate as substrates, resulting from enzyme-catalyzed isomerization of RBP and G3P, respectively. The chain is Pyridoxal 5'-phosphate synthase subunit PdxS from Francisella philomiragia subsp. philomiragia (strain ATCC 25017 / CCUG 19701 / FSC 153 / O#319-036).